Consider the following 323-residue polypeptide: Olfactory receptor 52B2 (323 aa).

The Extracellular portion of the chain corresponds to 1-27 (MSHTNVTIFHPAVFVLPGIPGLEAYHI). The N-linked (GlcNAc...) asparagine glycan is linked to asparagine 5. A helical membrane pass occupies residues 28 to 48 (WLSIPLCLIYITAVLGNSILI). Residues 49–56 (VVIVMERN) are Cytoplasmic-facing. A helical transmembrane segment spans residues 57 to 77 (LHVPMYFFLSMLAVMDILLST). The Extracellular segment spans residues 78-101 (TTVPKALAIFWLQAHNIAFDACVT). A disulfide bridge connects residues cysteine 99 and cysteine 191. The chain crosses the membrane as a helical span at residues 102–122 (QGFFVHMMFVGESAILLAMAF). Residues 123-141 (DRFVAICAPLRYTTVLTWP) are Cytoplasmic-facing. Residues 142 to 162 (VVGRIALAVITRSFCIIFPVI) form a helical membrane-spanning segment. Residues 163-198 (FLLKRLPFCLTNIVPHSYCEHIGVARLACADITVNI) are Extracellular-facing. The chain crosses the membrane as a helical span at residues 199-219 (WYGFSVPIVMVILDVILIAVS). Residues 220–239 (YSLILRAVFRLPSQDARHKA) are Cytoplasmic-facing. The helical transmembrane segment at 240 to 260 (LSTCGSHLCVILMFYVPSFFT) threads the bilayer. The Extracellular segment spans residues 261 to 275 (LLTHHFGRNIPQHVH). The chain crosses the membrane as a helical span at residues 276–296 (ILLANLYVAVPPMLNPIVYGV). The Cytoplasmic portion of the chain corresponds to 297-323 (KTKQIREGVAHRFFDIKTWCCTSPLGS).

Belongs to the G-protein coupled receptor 1 family.

It is found in the cell membrane. Its function is as follows. Odorant receptor. The polypeptide is Olfactory receptor 52B2 (OR52B2) (Homo sapiens (Human)).